A 125-amino-acid chain; its full sequence is Ixonnexin (125 aa).

The N-terminal stretch at 1 to 21 (MGLTGTTLVLVCVAFFGSAAA) is a signal peptide. Asn-26 carries N-linked (GlcNAc...) asparagine glycosylation. A disordered region spans residues 81-125 (TSSGGPDDTGDNTPPPTEKPKQKKKKPKKTKKPKRKSKKDQKENF). Residues 101 to 119 (KQKKKKPKKTKKPKRKSKK) are compositionally biased toward basic residues.

It belongs to the salp14 family. In terms of assembly, homodimer. Interacts with host PLG. Interacts with host PLAT. As to expression, saliva (at protein level).

The protein localises to the secreted. Salivary protein that promotes host fibrinolysis via accelerating host plasmin generation from plasminogen (PLG) initiated by tPA/tissue-type plasminogen activator (PLAT). Does not affect urokinase (PLAU)-mediated fibrinolysis in the host. Enhances amidolytic activity of host coagulation factor Xa (F10). This is Ixonnexin from Ixodes scapularis (Black-legged tick).